The primary structure comprises 135 residues: Malate dehydrogenase (135 aa).

NAD(+) is bound by residues 7–12 (XAAGGI) and Asp-25. Residues Arg-72 and Arg-78 each coordinate substrate. NAD(+) is bound by residues Asn-85 and 108–110 (ITN). Asn-110 is a substrate binding site.

This sequence belongs to the LDH/MDH superfamily. MDH type 1 family. As to quaternary structure, homodimer.

The catalysed reaction is (S)-malate + NAD(+) = oxaloacetate + NADH + H(+). Its function is as follows. Catalyzes the reversible oxidation of malate to oxaloacetate. The polypeptide is Malate dehydrogenase (mdh) (Klebsiella pneumoniae).